Here is a 763-residue protein sequence, read N- to C-terminus: ATP-dependent RNA helicase glh-1 (763 aa).

The disordered stretch occupies residues 1-30 (MSDGWSDSESAAKAKTGFGSGGGFGGGNNG). The segment covering 18 to 30 (FGSGGGFGGGNNG) has biased composition (gly residues). Repeat copies occupy residues 24-33 (FGGGNNGGSG), 34-43 (FGGGKNGGTG), 44-53 (FGGGNTGGSG), 54-63 (FGGGNTGGSG), 64-73 (FGGGKTGGSG), 74-83 (FGGGNTCGSG), and 84-93 (FGGGSTGGSP). The segment at 24–93 (FGGGNNGGSG…FGGGSTGGSP (70 aa)) is 7 X 10 AA tandem repeats, Gly-rich. 2 consecutive CCHC-type zinc fingers follow at residues 158–175 (NNCF…DCPE) and 183–200 (RVCY…ECTE). The disordered stretch occupies residues 193 to 230 (HTSRECTEERKPREGRTGGFGGGAGFGNNGGNDGFGGD). Residues 194–208 (TSRECTEERKPREGR) are compositionally biased toward basic and acidic residues. Residues 209–230 (TGGFGGGAGFGNNGGNDGFGGD) are compositionally biased toward gly residues. 2 CCHC-type zinc fingers span residues 242 to 259 (MKCF…ECPE) and 262 to 279 (RGCF…ECPN). A Q motif motif is present at residues 341–369 (KTFAEANLTETMQKNVAHAGYSKTTPIQQ). One can recognise a Helicase ATP-binding domain in the interval 372-556 (LPLVHQGYDI…RAFLRENYVM (185 aa)). An ATP-binding site is contributed by 385-392 (AQTGSGKT). The Phosphodegron motif lies at 423 to 427 (ILTPT). The DEAD box signature appears at 499 to 502 (DEAD). Residues 592-739 (DIDSYTTEKS…IVPDWMQGAA (148 aa)) form the Helicase C-terminal domain.

It belongs to the DEAD box helicase family. DDX4/VASA subfamily. As to quaternary structure, interacts with csn-5; this may prevent glh-1 degradation induced by kgb-1. Interacts with zyx-1. Interacts (via the N-terminal region containing the four CCHC zinc fingers) with pan-1. Interacts with kgb-1; this may promote glh-1 degradation by the proteasome. In terms of processing, phosphorylated by kgb-1 (in vitro); this may be responsible for its degradation by the proteasome.

The protein resides in the cytoplasm. It localises to the cytoplasmic granule. Its subcellular location is the perinuclear region. The enzyme catalyses ATP + H2O = ADP + phosphate + H(+). Functionally, probable ATP-binding RNA helicase. May act redundantly with the P-granule component glh-4 to regulate the formation of the granular structure of P-granules in embryos. Plays a role in positively regulating the localization of pgl-1 to P-granules. May play a role in transgenerational epigenetic inheritance. May protect somatic cells from excessive apoptosis during normal development. This Caenorhabditis elegans protein is ATP-dependent RNA helicase glh-1.